A 137-amino-acid polypeptide reads, in one-letter code: Large ribosomal subunit protein uL16 (137 aa).

Belongs to the universal ribosomal protein uL16 family. Part of the 50S ribosomal subunit.

In terms of biological role, binds 23S rRNA and is also seen to make contacts with the A and possibly P site tRNAs. This chain is Large ribosomal subunit protein uL16, found in Nitratidesulfovibrio vulgaris (strain ATCC 29579 / DSM 644 / CCUG 34227 / NCIMB 8303 / VKM B-1760 / Hildenborough) (Desulfovibrio vulgaris).